We begin with the raw amino-acid sequence, 381 residues long: MMRKSLCCALLLGISCSALATPVSEKQLAEVVANTITPLMKAQSVPGMAVAVIYQGKPHYYTFGKADIAANKPVTPQTLFELGSISKTFTGVLGGDAIARGEISLDDAVTRYWPQLTGKQWQGIRMLDLATYTAGGLPLQVPDEVTDNASLLRFYQNWQPQWKPGTTRLYANASIGLFGALAVKPSGMPYEQAMTTRVLKPLKLDHTWINVPKAEEAHYAWGYRDGKAVRVSPGMLDAQAYGVKTNVQDMANWVMANMAPENVADASLKQGIALAQSRYWRIGSMYQGLGWEMLNWPVEANTVVEGSDSKVALAPLPVAEVNPPAPPVKASWVHKTGSTGGFGSYVAFIPEKQIGIVMLANTSYPNPARVEAAYHILEALQ.

The first 20 residues, 1–20 (MMRKSLCCALLLGISCSALA), serve as a signal peptide directing secretion. The active-site Acyl-ester intermediate is Ser84. Residue Tyr170 is the Proton acceptor of the active site. 335–337 (KTG) lines the substrate pocket.

It belongs to the class-C beta-lactamase family.

It is found in the periplasm. The catalysed reaction is a beta-lactam + H2O = a substituted beta-amino acid. Its function is as follows. This protein is a serine beta-lactamase with a substrate specificity for cephalosporins. This chain is Beta-lactamase (ampC), found in Enterobacter cloacae.